Reading from the N-terminus, the 714-residue chain is Protein artemis (714 aa).

Disordered regions lie at residues 391 to 500, 516 to 577, 598 to 617, and 638 to 683; these read ELFD…ESNA, ESSE…TVLI, ALLS…RWKL, and EKDA…LTPD. The segment covering 427–440 has biased composition (polar residues); that stretch reads NESTESYRANTAYT. Residues 447-468 show a composition bias toward acidic residues; sequence VDCEESNDDDDDDDDDDKEDDS. Polar residues-rich tracts occupy residues 484–500 and 532–543; these read SIAS…ESNA and GSQSLFSDSDGV. The segment covering 544-561 has biased composition (low complexity); sequence SDSTHISSQNSSQSTHIS. Positions 562-577 are enriched in polar residues; it reads EQGSQGWDSQMDTVLI. Composition is skewed to basic and acidic residues over residues 603-615 and 660-670; these read DTPR…DSRW and RTPDLELKRDS. Residue Ser670 is modified to Phosphoserine; by ATM.

Belongs to the DNA repair metallo-beta-lactamase (DRMBL) family. Interacts with PRKDC. Post-translationally, phosphorylation on undefined residues by PRKDC may stimulate endonucleolytic activity on 5' and 3' hairpins and overhangs. PRKDC must remain present, even after phosphorylation, for efficient hairpin opening.

It localises to the nucleus. Its function is as follows. Required for V(D)J recombination, the process by which exons encoding the antigen-binding domains of immunoglobulins and T-cell receptor proteins are assembled from individual V, (D), and J gene segments. V(D)J recombination is initiated by the lymphoid specific RAG endonuclease complex, which generates site specific DNA double strand breaks (DSBs). These DSBs present two types of DNA end structures: hairpin sealed coding ends and phosphorylated blunt signal ends. These ends are independently repaired by the non homologous end joining (NHEJ) pathway to form coding and signal joints respectively. This protein exhibits single-strand specific 5'-3' exonuclease activity in isolation, and acquires endonucleolytic activity on 5' and 3' hairpins and overhangs when in a complex with PRKDC. The latter activity is required specifically for the resolution of closed hairpins prior to the formation of the coding joint. May also be required for the repair of complex DSBs induced by ionizing radiation, which require substantial end-processing prior to religation by NHEJ. This is Protein artemis (DCLRE1C) from Gallus gallus (Chicken).